We begin with the raw amino-acid sequence, 146 residues long: Bacterial hemoglobin (146 aa).

In terms of domain architecture, Globin spans 1 to 138 (MLDQQTINII…IADVFIQVEA (138 aa)). Heme b contacts are provided by glutamine 53 and histidine 85.

The protein belongs to the globin family. In terms of assembly, homodimer.

Functionally, this protein functions as a terminal oxidase. This Vitreoscilla stercoraria protein is Bacterial hemoglobin (vhb).